The chain runs to 384 residues: N-acetyldiaminopimelate deacetylase (384 aa).

Asp-73 is a catalytic residue. Glu-132 serves as the catalytic Proton acceptor.

This sequence belongs to the peptidase M20A family. N-acetyldiaminopimelate deacetylase subfamily.

It catalyses the reaction N-acetyl-(2S,6S)-2,6-diaminopimelate + H2O = (2S,6S)-2,6-diaminopimelate + acetate. The protein operates within amino-acid biosynthesis; L-lysine biosynthesis via DAP pathway; LL-2,6-diaminopimelate from (S)-tetrahydrodipicolinate (acetylase route): step 3/3. Functionally, catalyzes the conversion of N-acetyl-diaminopimelate to diaminopimelate and acetate. In Limosilactobacillus fermentum (strain NBRC 3956 / LMG 18251) (Lactobacillus fermentum), this protein is N-acetyldiaminopimelate deacetylase.